The sequence spans 209 residues: Uracil phosphoribosyltransferase (209 aa).

5-phospho-alpha-D-ribose 1-diphosphate contacts are provided by residues R79, R104, and D131–S139. Uracil contacts are provided by residues I194 and G199 to A201. D200 serves as a coordination point for 5-phospho-alpha-D-ribose 1-diphosphate.

It belongs to the UPRTase family. Mg(2+) serves as cofactor.

It catalyses the reaction UMP + diphosphate = 5-phospho-alpha-D-ribose 1-diphosphate + uracil. Its pathway is pyrimidine metabolism; UMP biosynthesis via salvage pathway; UMP from uracil: step 1/1. With respect to regulation, allosterically activated by GTP. Functionally, catalyzes the conversion of uracil and 5-phospho-alpha-D-ribose 1-diphosphate (PRPP) to UMP and diphosphate. The polypeptide is Uracil phosphoribosyltransferase (Sinorhizobium fredii (strain NBRC 101917 / NGR234)).